Consider the following 396-residue polypeptide: Na(+)/H(+) antiporter NhaA (396 aa).

Helical transmembrane passes span 14-34, 59-79, 95-115, 124-144, 154-174, 178-198, 205-225, 254-274, 278-298, 328-348, and 363-383; these read ASGIILIMAAVLAMILANSGL, LLLWINDGFMAIFFLLVGLEV, TFPAIAAVGGMLAPALIYTFF, AGWAIPAATDIAFALGVMALL, VFLLALAIMDDLGVIIIIALF, QLSLEALAVGILATLTLLWMN, IGLYMLVGLVLWVAVLKSGVH, ALHPWSAYLILPLFAFANAGV, GIGLSSLLSPVPMGIMLGLFV, IFAVSILCGIGFTMSMFIASL, and LGILVGSTLAAVVGYLALRMS.

The protein belongs to the NhaA Na(+)/H(+) (TC 2.A.33) antiporter family.

It is found in the cell inner membrane. It carries out the reaction Na(+)(in) + 2 H(+)(out) = Na(+)(out) + 2 H(+)(in). Its function is as follows. Na(+)/H(+) antiporter that extrudes sodium in exchange for external protons. The chain is Na(+)/H(+) antiporter NhaA from Aeromonas salmonicida (strain A449).